The chain runs to 598 residues: Major royal jelly protein 5 (598 aa).

The N-terminal stretch at 1–17 (MTTWLLLVVCLGIACQG) is a signal peptide. Asn148, Asn164, Asn181, and Asn324 each carry an N-linked (GlcNAc...) asparagine glycan.

This sequence belongs to the major royal jelly protein family. As to expression, found in and secreted from the hypopharyngeal glands of the worker honey bee (at protein level); expression peaks at 8 days post eclosion. Expressed in the brains of adult worker bees peaking at 12 days post eclosion (at protein level). Expressed in the spermatheca of adult queen bees (at protein level); Expression levels are higher in mated queens than in virgin queens. Expressed in the heads of worker bees after eclosion, expression dropping with age and detectable up to 26 days of age.

The protein resides in the secreted. Functionally, component of royal jelly, a substance produced in the hypopharyngeal gland containing proteins, free amino acids, fatty acids, sugars and other nutrients, which is fed to developing larvae by worker nurse bees. Major royal jelly proteins (MRJPs) are high in essential amino acids and probably have a nutritional function in larval food. All larvae are fed some royal jelly (also known as worker jelly) early in their development but it forms the principal source of nutrition for larvae destined to become queen bees. Produced in the spermatheca of adult queen bees, along with other major royal jelly proteins, where it may act as a nutrient supply for sperm stored by mated queens, or be involved in energy metabolism. The chain is Major royal jelly protein 5 from Apis mellifera (Honeybee).